Here is a 231-residue protein sequence, read N- to C-terminus: Biosynthetic peptidoglycan transglycosylase (231 aa).

A helical transmembrane segment spans residues 7–27 (LLFWLILVPILLVLLMQLYFF).

The protein belongs to the glycosyltransferase 51 family.

The protein resides in the cell inner membrane. The enzyme catalyses [GlcNAc-(1-&gt;4)-Mur2Ac(oyl-L-Ala-gamma-D-Glu-L-Lys-D-Ala-D-Ala)](n)-di-trans,octa-cis-undecaprenyl diphosphate + beta-D-GlcNAc-(1-&gt;4)-Mur2Ac(oyl-L-Ala-gamma-D-Glu-L-Lys-D-Ala-D-Ala)-di-trans,octa-cis-undecaprenyl diphosphate = [GlcNAc-(1-&gt;4)-Mur2Ac(oyl-L-Ala-gamma-D-Glu-L-Lys-D-Ala-D-Ala)](n+1)-di-trans,octa-cis-undecaprenyl diphosphate + di-trans,octa-cis-undecaprenyl diphosphate + H(+). It participates in cell wall biogenesis; peptidoglycan biosynthesis. Its function is as follows. Peptidoglycan polymerase that catalyzes glycan chain elongation from lipid-linked precursors. The polypeptide is Biosynthetic peptidoglycan transglycosylase (Herminiimonas arsenicoxydans).